Here is a 333-residue protein sequence, read N- to C-terminus: Glyceraldehyde-3-phosphate dehydrogenase (333 aa).

Residues 12–13, D36, R80, and S120 contribute to the NAD(+) site; that span reads RI. D-glyceraldehyde 3-phosphate is bound by residues 150–152, T181, R196, 209–210, and R232; these read SCT and TG. C151 serves as the catalytic Nucleophile. N314 contributes to the NAD(+) binding site.

Belongs to the glyceraldehyde-3-phosphate dehydrogenase family. As to quaternary structure, homotetramer.

The protein resides in the cytoplasm. It carries out the reaction D-glyceraldehyde 3-phosphate + phosphate + NAD(+) = (2R)-3-phospho-glyceroyl phosphate + NADH + H(+). It participates in carbohydrate degradation; glycolysis; pyruvate from D-glyceraldehyde 3-phosphate: step 1/5. In terms of biological role, catalyzes the oxidative phosphorylation of glyceraldehyde 3-phosphate (G3P) to 1,3-bisphosphoglycerate (BPG) using the cofactor NAD. The first reaction step involves the formation of a hemiacetal intermediate between G3P and a cysteine residue, and this hemiacetal intermediate is then oxidized to a thioester, with concomitant reduction of NAD to NADH. The reduced NADH is then exchanged with the second NAD, and the thioester is attacked by a nucleophilic inorganic phosphate to produce BPG. In Cereibacter sphaeroides (Rhodobacter sphaeroides), this protein is Glyceraldehyde-3-phosphate dehydrogenase (gapB).